The following is a 359-amino-acid chain: Fructose-1,6-bisphosphatase class 1 (359 aa).

Mg(2+) is bound by residues E95, D117, L119, and D120. Substrate-binding positions include 120 to 123 and N212; that span reads DGSS. E284 lines the Mg(2+) pocket.

The protein belongs to the FBPase class 1 family. As to quaternary structure, homotetramer. Mg(2+) is required as a cofactor.

It is found in the cytoplasm. It catalyses the reaction beta-D-fructose 1,6-bisphosphate + H2O = beta-D-fructose 6-phosphate + phosphate. Its pathway is carbohydrate biosynthesis; gluconeogenesis. This Hydrogenophilus thermoluteolus (Pseudomonas hydrogenothermophila) protein is Fructose-1,6-bisphosphatase class 1.